A 312-amino-acid chain; its full sequence is 3-methyl-2-oxobutanoate hydroxymethyltransferase (312 aa).

Belongs to the PanB family.

It carries out the reaction 3-methyl-2-oxobutanoate + (6R)-5,10-methylene-5,6,7,8-tetrahydrofolate + H2O = 2-dehydropantoate + (6S)-5,6,7,8-tetrahydrofolate. Its pathway is cofactor biosynthesis; (R)-pantothenate biosynthesis; (R)-pantoate from 3-methyl-2-oxobutanoate: step 1/2. Probable 3-methyl-2-oxobutanoate hydroxymethyltransferase required for pantothenic acid biosynthesis. Acts downstream in the pantothenic acid pathway. The chain is 3-methyl-2-oxobutanoate hydroxymethyltransferase from Saccharomyces cerevisiae (strain ATCC 204508 / S288c) (Baker's yeast).